A 167-amino-acid polypeptide reads, in one-letter code: MALNLQGKQAIVAEVKEVAKGALSAVVADSRGVTVDKMTELRKAGREAGVHMQVVRNTLLSRAVEGTPFECLKDTFVGPTLIAFSSEHPGAAARLFKAFAKDNAKFEVKAAAFEGELIPAAQIDRLATLPTYEEAIARLMGTMKEAAAGKLVRTLAALRDQKEAEAA.

The protein belongs to the universal ribosomal protein uL10 family. Part of the ribosomal stalk of the 50S ribosomal subunit. The N-terminus interacts with L11 and the large rRNA to form the base of the stalk. The C-terminus forms an elongated spine to which L12 dimers bind in a sequential fashion forming a multimeric L10(L12)X complex.

Its function is as follows. Forms part of the ribosomal stalk, playing a central role in the interaction of the ribosome with GTP-bound translation factors. In Yersinia enterocolitica serotype O:8 / biotype 1B (strain NCTC 13174 / 8081), this protein is Large ribosomal subunit protein uL10.